A 210-amino-acid chain; its full sequence is Thymidylate kinase (210 aa).

An ATP-binding site is contributed by 10–17; sequence GPEGAGKS.

This sequence belongs to the thymidylate kinase family.

It carries out the reaction dTMP + ATP = dTDP + ADP. In terms of biological role, phosphorylation of dTMP to form dTDP in both de novo and salvage pathways of dTTP synthesis. The chain is Thymidylate kinase from Pseudomonas entomophila (strain L48).